A 940-amino-acid chain; its full sequence is Valine--tRNA ligase (940 aa).

The 'HIGH' region motif lies at 47–57 (PNVTGILHMGH). Residues 564 to 568 (KLSKS) carry the 'KMSKS' region motif. Residue K567 participates in ATP binding. The stretch at 873-937 (VEHIAKEKTR…ELQSILDKLA (65 aa)) forms a coiled coil.

This sequence belongs to the class-I aminoacyl-tRNA synthetase family. ValS type 1 subfamily. In terms of assembly, monomer.

The protein localises to the cytoplasm. The catalysed reaction is tRNA(Val) + L-valine + ATP = L-valyl-tRNA(Val) + AMP + diphosphate. In terms of biological role, catalyzes the attachment of valine to tRNA(Val). As ValRS can inadvertently accommodate and process structurally similar amino acids such as threonine, to avoid such errors, it has a 'posttransfer' editing activity that hydrolyzes mischarged Thr-tRNA(Val) in a tRNA-dependent manner. The sequence is that of Valine--tRNA ligase from Chlamydia abortus (strain DSM 27085 / S26/3) (Chlamydophila abortus).